The primary structure comprises 587 residues: Aspartate--tRNA ligase (587 aa).

Residue Glu-174 participates in L-aspartate binding. An aspartate region spans residues Gln-198–Lys-201. Arg-220 lines the L-aspartate pocket. Residues Arg-220–Glu-222 and Gln-229 contribute to the ATP site. Residue His-447 participates in L-aspartate binding. Glu-481 serves as a coordination point for ATP. Residue Arg-488 participates in L-aspartate binding. Gly-533–Arg-536 lines the ATP pocket.

Belongs to the class-II aminoacyl-tRNA synthetase family. Type 1 subfamily. In terms of assembly, homodimer.

Its subcellular location is the cytoplasm. The catalysed reaction is tRNA(Asp) + L-aspartate + ATP = L-aspartyl-tRNA(Asp) + AMP + diphosphate. Functionally, catalyzes the attachment of L-aspartate to tRNA(Asp) in a two-step reaction: L-aspartate is first activated by ATP to form Asp-AMP and then transferred to the acceptor end of tRNA(Asp). The chain is Aspartate--tRNA ligase from Porphyromonas gingivalis (strain ATCC BAA-308 / W83).